Reading from the N-terminus, the 343-residue chain is Fructose-1,6-bisphosphatase class 1 (343 aa).

E99, D121, L123, and D124 together coordinate Mg(2+). Substrate-binding positions include 124–127 (DGSS), N218, Y250, and K283. E289 is a binding site for Mg(2+).

This sequence belongs to the FBPase class 1 family. As to quaternary structure, homotetramer. It depends on Mg(2+) as a cofactor.

The protein localises to the cytoplasm. The enzyme catalyses beta-D-fructose 1,6-bisphosphate + H2O = beta-D-fructose 6-phosphate + phosphate. It participates in carbohydrate biosynthesis; gluconeogenesis. The sequence is that of Fructose-1,6-bisphosphatase class 1 from Leptospira biflexa serovar Patoc (strain Patoc 1 / Ames).